The primary structure comprises 398 residues: Acetate kinase (398 aa).

N10 is a binding site for Mg(2+). Residue K17 participates in ATP binding. Substrate is bound at residue R89. D148 serves as the catalytic Proton donor/acceptor. Residues 208–212 (HLGNG), 283–285 (DCR), and 331–335 (GIGEN) each bind ATP. E385 contacts Mg(2+).

This sequence belongs to the acetokinase family. As to quaternary structure, homodimer. It depends on Mg(2+) as a cofactor. Requires Mn(2+) as cofactor.

Its subcellular location is the cytoplasm. It catalyses the reaction acetate + ATP = acetyl phosphate + ADP. Its pathway is metabolic intermediate biosynthesis; acetyl-CoA biosynthesis; acetyl-CoA from acetate: step 1/2. In terms of biological role, catalyzes the formation of acetyl phosphate from acetate and ATP. Can also catalyze the reverse reaction. The sequence is that of Acetate kinase from Histophilus somni (strain 129Pt) (Haemophilus somnus).